We begin with the raw amino-acid sequence, 393 residues long: Staphopain B (393 aa).

An N-terminal signal peptide occupies residues 1–36 (MNSSCKTRVFNIISIIMVSMLILSLGAFANNNKAKA). A propeptide spanning residues 37 to 219 (DSHSKQLEIN…KVEENEAIQE (183 aa)) is cleaved from the precursor. Catalysis depends on residues Cys-243, His-340, and Asn-360.

This sequence belongs to the peptidase C47 family. In terms of assembly, in the cytoplasm, prematurely activated/folded SspB forms a stable non-covalent complex with SspC. Proteolytically cleaved by staphylococcal serine protease (SspA).

It is found in the secreted. Its activity is regulated as follows. Prematurely activated/folded staphopain B is inhibited by staphostatin B (SspC), which is probably required to protect staphylococcal cytoplasmic proteins from degradation by SspB. Cysteine protease that plays an important role in the inhibition of host innate immune response. Degrades host elastin, fibrogen, fibronectin and kininogen. Blocks phagocytosis of opsonised S.aureus by neutrophils and monocytes by inducing their death in a proteolytic activity-dependent manner. Decreases surface expression of the 'don't eat me' signal CD31 on neutrophils. Cleaves host galectin-3/LGALS3, thereby inhibiting the neutrophil-activating ability of the lectin. The protein is Staphopain B (sspB) of Staphylococcus aureus (strain MRSA252).